Consider the following 596-residue polypeptide: SUN domain-containing protein 4 (596 aa).

Residues 28–48 (VSLSLVFLIWGLVFLSTLWIS) form a helical membrane-spanning segment. Disordered regions lie at residues 58–98 (LVDS…LSSD) and 139–158 (KQSE…TTGS). Residues 66 to 77 (EPDDERADETAE) are compositionally biased toward acidic residues. Composition is skewed to polar residues over residues 80 to 95 (DATS…NPGL) and 141 to 158 (SEIN…TTGS). In terms of domain architecture, SUN spans 179–343 (SNSRDKSLSG…SLLEVYGVDA (165 aa)). The span at 366–396 (DTEQKEKKTMQAKESFESDEDKSKQKEKEQE) shows a compositional bias: basic and acidic residues. Residues 366–410 (DTEQKEKKTMQAKESFESDEDKSKQKEKEQEASPENAVVKDEVSL) are disordered. Residues 475–544 (ASKREKEVET…LERLEWMEKK (70 aa)) are a coiled coil. The next 2 membrane-spanning stretches (helical) occupy residues 545–565 (GVVV…AVVF) and 576–596 (GGLA…ILSL).

In terms of assembly, forms homomers and heteromers with SUN3. Interacts with SUN1, SUN2 and TIK.

It localises to the nucleus membrane. Its subcellular location is the endoplasmic reticulum membrane. Its function is as follows. Encodes a member of the mid-SUN subfamily of SUN-domain proteins that is localized to both the nuclear envelope and the ER. It is involved in early seed development and nuclear morphology. [TAIR]. The chain is SUN domain-containing protein 4 from Arabidopsis thaliana (Mouse-ear cress).